A 457-amino-acid chain; its full sequence is UDP-N-acetylmuramoyl-tripeptide--D-alanyl-D-alanine ligase (457 aa).

An ATP-binding site is contributed by Gly113–Thr119.

This sequence belongs to the MurCDEF family. MurF subfamily.

The protein localises to the cytoplasm. It carries out the reaction D-alanyl-D-alanine + UDP-N-acetyl-alpha-D-muramoyl-L-alanyl-gamma-D-glutamyl-meso-2,6-diaminopimelate + ATP = UDP-N-acetyl-alpha-D-muramoyl-L-alanyl-gamma-D-glutamyl-meso-2,6-diaminopimeloyl-D-alanyl-D-alanine + ADP + phosphate + H(+). The protein operates within cell wall biogenesis; peptidoglycan biosynthesis. Functionally, involved in cell wall formation. Catalyzes the final step in the synthesis of UDP-N-acetylmuramoyl-pentapeptide, the precursor of murein. The sequence is that of UDP-N-acetylmuramoyl-tripeptide--D-alanyl-D-alanine ligase from Bacillus subtilis (strain 168).